The chain runs to 248 residues: MKSYIEPFIASKALSQNSQKAYRYDLQQFCQLVGERVNQDKLLLYQNSIANLSLSAKKRKLSTANQFLYYLYQIKYLNSYFRLTDTMKVMRTEKQQAAIINTDIFYQKTPFVWGQLISLLILELGLTPSEVAGIEVANLDLSFQMLTLKTKKGVRVLPLSQILIPFLEQQLVGKEVYLFEHRGIPFSRQWFFNHLKTFVRSIGYEGLTAQKLREQFILKEKLAGKSIIELSDILGLKSPVTLEKYYKS.

Residues 1-72 form the Core-binding (CB) domain; it reads MKSYIEPFIA…TANQFLYYLY (72 aa). Residues 85 to 248 enclose the Tyr recombinase domain; sequence DTMKVMRTEK…PVTLEKYYKS (164 aa). Active-site residues include lysine 149 and arginine 213. The active-site O-(3'-phospho-DNA)-tyrosine intermediate is tyrosine 245.

Belongs to the 'phage' integrase family. XerD-like subfamily.

It is found in the cytoplasm. Its function is as follows. Putative tyrosine recombinase. Not involved in the cutting and rejoining of the recombining DNA molecules on dif(SL) site. The sequence is that of Tyrosine recombinase XerD-like from Streptococcus pyogenes serotype M6 (strain ATCC BAA-946 / MGAS10394).